Here is a 577-residue protein sequence, read N- to C-terminus: Arginine--tRNA ligase (577 aa).

Residues 122–132 carry the 'HIGH' region motif; that stretch reads PNVAKEMHVGH.

The protein belongs to the class-I aminoacyl-tRNA synthetase family. As to quaternary structure, monomer.

Its subcellular location is the cytoplasm. It carries out the reaction tRNA(Arg) + L-arginine + ATP = L-arginyl-tRNA(Arg) + AMP + diphosphate. This chain is Arginine--tRNA ligase, found in Shigella flexneri serotype 5b (strain 8401).